The primary structure comprises 154 residues: MILTVKPLQGKECNVQVTEDEKVSTVKELVSERLNIPANQQRLLYKGKALADEHRLSDYSIGPEAKLNLVVRPAGERSGVAGMASSSSAVSGVWQTLSTVLAKHFSPADAAKVQEQLVKDYERSLRQLSLDDIERLAGRLLHPDSEGMDTSYMD.

The Ubiquitin-like domain maps to 1 to 76; sequence MILTVKPLQG…LNLVVRPAGE (76 aa).

In terms of assembly, component of the BAT3 complex.

The protein resides in the cytoplasm. The protein localises to the cytosol. In terms of biological role, component of the BAT3 complex, a multiprotein complex involved in the post-translational delivery of tail-anchored (TA) membrane proteins to the endoplasmic reticulum membrane. TA membrane proteins, also named type II transmembrane proteins, contain a single C-terminal transmembrane region. The sequence is that of Ubiquitin-like protein 4A-A (ubl4aa) from Salmo salar (Atlantic salmon).